The following is a 206-amino-acid chain: Guanylate kinase (206 aa).

The region spanning 5–183 is the Guanylate kinase-like domain; the sequence is FNLLILSGPS…SKEIILSIAK (179 aa). 12–19 lines the ATP pocket; that stretch reads GPSGAGKS.

The protein belongs to the guanylate kinase family.

It localises to the cytoplasm. It catalyses the reaction GMP + ATP = GDP + ADP. In terms of biological role, essential for recycling GMP and indirectly, cGMP. The sequence is that of Guanylate kinase (gmk) from Helicobacter pylori (strain ATCC 700392 / 26695) (Campylobacter pylori).